Consider the following 358-residue polypeptide: Probable D-xylulose reductase A (358 aa).

The Zn(2+) site is built by Cys-47, His-72, and Glu-73. 182 to 187 provides a ligand contact to NAD(+); sequence GAGPVG.

Belongs to the zinc-containing alcohol dehydrogenase family. Requires Zn(2+) as cofactor.

It carries out the reaction xylitol + NAD(+) = D-xylulose + NADH + H(+). It functions in the pathway carbohydrate degradation; L-arabinose degradation via L-arabinitol; D-xylulose 5-phosphate from L-arabinose (fungal route): step 4/5. Its function is as follows. Xylitol dehydrogenase which catalyzes the conversion of xylitol to D-xylulose. Xylose is a major component of hemicelluloses such as xylan. Most fungi utilize D-xylose via three enzymatic reactions, xylose reductase (XR), xylitol dehydrogenase (XDH), and xylulokinase, to form xylulose 5-phosphate, which enters pentose phosphate pathway. This Aspergillus niger (strain ATCC MYA-4892 / CBS 513.88 / FGSC A1513) protein is Probable D-xylulose reductase A (xdhA).